Reading from the N-terminus, the 61-residue chain is Defensin BmKDfsin1 (61 aa).

The signal sequence occupies residues 1 to 25 (MKTIVLLFVLVLVFALLVKMGMVEA). Cystine bridges form between Cys-29/Cys-50, Cys-36/Cys-58, and Cys-40/Cys-60.

This sequence belongs to the invertebrate defensin family. Type 2 subfamily. Highly expressed in non-venom gland (hemolymph) and moderately expressed in venom gland.

It localises to the secreted. Functionally, antibacterial peptide active against Gram-positive bacteria, but not on Gram-negative bacteria. Also has weak blocking activity on Kv1.1/KCNA1, Kv1.2/KCNA2, Kv1.3/KCNA3, KCa3.1/KCNN4/IK, KCa2.3/KCNN3/SK3 and Kv11.1/KCNH2/ERG1 channels (tested at 1 uM). It inhibits potassium channel current by interacting with the pore region. The chain is Defensin BmKDfsin1 from Olivierus martensii (Manchurian scorpion).